Reading from the N-terminus, the 274-residue chain is WIMGHMVNAIERVDEFLNLGANAIEFDIDFDKDGIAQITHHGIPCNCGRKCTKKAIFTEYLDNIRQVTTPDDPKFREQLVLLALDLKLLRISSAKAYRAGEDVAKKLLDHYWQRGNSRARAYILLNIPLVEDYEFIRAFKDTLKNEGYESYNDKVGINFTGNEDLDKIRDVLEILGIHKQVWQADGITSCFARGTERLKEALEKRDTPGYNYINKIYAWTLVRKSIMRRSLRLGVDGVMSNNPDRVIKVLKEKEFADKFRLATYNDNPWEKFRG.

The active site involves H5. Mg(2+) is bound by residues E25 and D27. H41 serves as the catalytic Nucleophile. 2 disulfides stabilise this stretch: C45/C51 and C47/C190. Position 85 (D85) interacts with Mg(2+).

This sequence belongs to the arthropod phospholipase D family. Class II subfamily. Mg(2+) is required as a cofactor. Expressed by the venom gland.

It localises to the secreted. The enzyme catalyses an N-(acyl)-sphingosylphosphocholine = an N-(acyl)-sphingosyl-1,3-cyclic phosphate + choline. It catalyses the reaction an N-(acyl)-sphingosylphosphoethanolamine = an N-(acyl)-sphingosyl-1,3-cyclic phosphate + ethanolamine. It carries out the reaction a 1-acyl-sn-glycero-3-phosphocholine = a 1-acyl-sn-glycero-2,3-cyclic phosphate + choline. The catalysed reaction is a 1-acyl-sn-glycero-3-phosphoethanolamine = a 1-acyl-sn-glycero-2,3-cyclic phosphate + ethanolamine. Its function is as follows. Dermonecrotic toxins cleave the phosphodiester linkage between the phosphate and headgroup of certain phospholipids (sphingolipid and lysolipid substrates), forming an alcohol (often choline) and a cyclic phosphate. This toxin acts on sphingomyelin (SM). It may also act on ceramide phosphoethanolamine (CPE), lysophosphatidylcholine (LPC) and lysophosphatidylethanolamine (LPE), but not on lysophosphatidylserine (LPS), and lysophosphatidylglycerol (LPG). It acts by transphosphatidylation, releasing exclusively cyclic phosphate products as second products. Induces dermonecrosis, hemolysis, increased vascular permeability, edema, inflammatory response, and platelet aggregation. In Sicarius cf. damarensis (strain GJB-2008) (Six-eyed sand spider), this protein is Dermonecrotic toxin SdSicTox-betaIIB1bx.